The primary structure comprises 128 residues: uncharacterized protein (128 aa).

It is found in the mitochondrion. This is an uncharacterized protein from Schizosaccharomyces pombe (strain 972 / ATCC 24843) (Fission yeast).